A 66-amino-acid polypeptide reads, in one-letter code: Ribosome biogenesis protein Nop10 (66 aa).

Belongs to the NOP10 family.

Functionally, involved in ribosome biogenesis; more specifically in 18S rRNA pseudouridylation and in cleavage of pre-rRNA. The chain is Ribosome biogenesis protein Nop10 from Staphylothermus marinus (strain ATCC 43588 / DSM 3639 / JCM 9404 / F1).